Consider the following 535-residue polypeptide: Putative subtilisin-like proteinase 2 (535 aa).

Positions 1–17 are cleaved as a signal peptide; the sequence is MFFVGVAVLAALQSVWG. Residues 221-475 form the Peptidase S8 domain; that stretch reads NWIFRVLQIK…IPRLGCKGRI (255 aa). Residues aspartate 255 and histidine 277 each act as charge relay system in the active site. Residues cysteine 369 and cysteine 400 are joined by a disulfide bond. Serine 420 serves as the catalytic Charge relay system. A helical transmembrane segment spans residues 489 to 509; that stretch reads IVPLVFVVLITSALLYLLLIG.

This sequence belongs to the peptidase S8 family.

Its subcellular location is the membrane. Functionally, may be involved in the degradation of proteins for nutrient acquisition or possess a regulatory function by proteolytic activation of proproteins. The chain is Putative subtilisin-like proteinase 2 (SPL2) from Encephalitozoon cuniculi (strain GB-M1) (Microsporidian parasite).